We begin with the raw amino-acid sequence, 364 residues long: Mannose-1-phosphate guanylyltransferase catalytic subunit beta (364 aa).

The interval 2–220 is substrate-binding domain; sequence KALILVGGYG…PGFWMDVGQP (219 aa). Position 109 (Asp109) interacts with GDP-alpha-D-mannose. Asp109 provides a ligand contact to Mg(2+). Lys160 is a catalytic residue. Asp216 serves as a coordination point for GDP-alpha-D-mannose. Position 216 (Asp216) interacts with Mg(2+). The hexapeptide repeat domain stretch occupies residues 243 to 364; that stretch reads ATGSNIHGTA…VNVPSKDIIM (122 aa).

Belongs to the transferase hexapeptide repeat family. Component of the GMPPA-GMPPB mannose-1-phosphate guanylyltransferase complex composed of 4 GMPPA subunits and 8 tag-335/GMPPB subunits; the complex is organized into three layers, a central layer made up of 2 GMPPA dimers sandwiched between two layers each made up of 2 tag-335/GMPPB dimers. Catalytic activity of tag-335/GMPPB is reduced when part of the complex and binding of GDP-alpha-D-Mannose by GMPPA induces allosteric feedback inhibition of tag-335/GMPPB. Mg(2+) serves as cofactor.

The enzyme catalyses alpha-D-mannose 1-phosphate + GTP + H(+) = GDP-alpha-D-mannose + diphosphate. It participates in nucleotide-sugar biosynthesis; GDP-alpha-D-mannose biosynthesis; GDP-alpha-D-mannose from alpha-D-mannose 1-phosphate (GTP route): step 1/1. Enzyme activity is reduced by incorporation into the GMPPA-GMPPB mannose-1-phosphate guanylyltransferase complex. Allosterically inhibited, when part of the GMPPA-GMPPB complex, by GDP-alpha-D-mannose binding to GMPPA. In terms of biological role, catalytic subunit of the GMPPA-GMPPB mannose-1-phosphate guanylyltransferase complex. Catalyzes the formation of GDP-mannose, an essential precursor of glycan moieties of glycoproteins and glycolipids. Can catalyze the reverse reaction in vitro. Together with GMPPA regulates GDP-alpha-D-mannose levels. In Caenorhabditis briggsae, this protein is Mannose-1-phosphate guanylyltransferase catalytic subunit beta.